The following is a 168-amino-acid chain: MAQNEETTEAVEAEETLTSYTSESGAAEAAAPKKERPALTVAGAAVGRRKEAVARVRVVPGSGKWIINGRELANYFPNKLHQQDVNEPFKILDLDGAYDVIARIHGGGPSGQAGALRLGIARSLNEIDIENNRAILKKAGYLTRDARVIERKKAGLKKARKAQQYSKR.

Over residues 1-15 (MAQNEETTEAVEAEE) the composition is skewed to acidic residues. Residues 1–34 (MAQNEETTEAVEAEETLTSYTSESGAAEAAAPKK) form a disordered region.

This sequence belongs to the universal ribosomal protein uS9 family.

The protein is Small ribosomal subunit protein uS9 of Arthrobacter sp. (strain FB24).